We begin with the raw amino-acid sequence, 319 residues long: G-protein coupled receptor 171 (319 aa).

The Extracellular segment spans residues 1-21; the sequence is MTNSSTFCPVYRDLEPFTYFF. Asn3 is a glycosylation site (N-linked (GlcNAc...) asparagine). A helical membrane pass occupies residues 22-42; sequence YLVFLIGIIGSCFATWAFIQK. The Cytoplasmic portion of the chain corresponds to 43 to 48; the sequence is NTNHRC. A helical membrane pass occupies residues 49–69; that stretch reads VSIYLINLLTADFLLTLALPV. The Extracellular segment spans residues 70–89; it reads KITVDLGVAPWKLRIFHCQV. A helical membrane pass occupies residues 90 to 110; sequence TACLIYINMYLSIIFLAFVSI. Over 111–132 the chain is Cytoplasmic; that stretch reads DRCLQLTYSCKIYRIQEPGFAK. The chain crosses the membrane as a helical span at residues 133-153; that stretch reads MISAVVWLMVLLIMVPNMIIP. Topologically, residues 154-181 are extracellular; the sequence is IKDIKEKPNVGCMEFKSEFGRNWHLLTN. Residues 182–202 traverse the membrane as a helical segment; the sequence is FISIAIFFNFSAIILISNCLV. At 203–224 the chain is on the cytoplasmic side; it reads IRQLYRNKDNENYPNVKRALIS. Residues 225–245 traverse the membrane as a helical segment; the sequence is ILLVTTGYIICFVPYHIVRIP. Topologically, residues 246–268 are extracellular; sequence YTLSQTEVISDCSTRISLFKAKE. Residues 269-289 traverse the membrane as a helical segment; the sequence is ATLLLAVSNLCFDPILYYHLS. The Cytoplasmic portion of the chain corresponds to 290-319; sequence KAFRLKITETFASHKESKAQKEKPRSENNA.

Belongs to the G-protein coupled receptor 1 family.

The protein localises to the cell membrane. In terms of biological role, G-protein coupled receptor for Big LEN, a 16-amino acid neuropeptide produced from the precursor protein, proSAAS (encoded by PCSK1N). Acts through a G(i)-alpha-mediated pathway in response to bigLEN. Big LEN-GPR171 system plays an important role in regulating feeding and metabolism. Also plays a role in modulating fear and anxiety-like behaviors in the basolateral amygdala. Big LEN-GPR171 modulates the mu-type opioid receptor signaling and antinociception. Acts as a negative regulator T cell function. This chain is G-protein coupled receptor 171 (GPR171), found in Bos taurus (Bovine).